The following is a 293-amino-acid chain: Small ribosomal subunit protein uS2m (293 aa).

Residues 21-38 show a composition bias toward low complexity; that stretch reads GRAAQRGRTLGSAAAAAA. Disordered stretches follow at residues 21 to 49 and 263 to 293; these read GRAAQRGRTLGSAAAAAAREPERDSDRSA and QGAPGPHPANPAAPGAPSPGAQAQLGMGHSP. A compositionally biased stretch (basic and acidic residues) spans 39 to 49; sequence REPERDSDRSA. Residues 267 to 279 are compositionally biased toward pro residues; sequence GPHPANPAAPGAP.

This sequence belongs to the universal ribosomal protein uS2 family. Component of the mitochondrial ribosome small subunit (28S) which comprises a 12S rRNA and about 30 distinct proteins.

It is found in the mitochondrion. In terms of biological role, required for mitoribosome formation and stability, and mitochondrial translation. The protein is Small ribosomal subunit protein uS2m (MRPS2) of Bos taurus (Bovine).